The primary structure comprises 59 residues: MAVPARRTSKAKKAKRRTHYKLTIKGLNACSNCGEMKKSHHVCPACGHYDGKDVMSKEA.

This sequence belongs to the bacterial ribosomal protein bL32 family.

In Enterococcus faecalis (strain ATCC 700802 / V583), this protein is Large ribosomal subunit protein bL32C (rpmF3).